The sequence spans 383 residues: Cobalt-precorrin-5B C(1)-methyltransferase (383 aa).

This sequence belongs to the CbiD family.

The enzyme catalyses Co-precorrin-5B + S-adenosyl-L-methionine = Co-precorrin-6A + S-adenosyl-L-homocysteine. The protein operates within cofactor biosynthesis; adenosylcobalamin biosynthesis; cob(II)yrinate a,c-diamide from sirohydrochlorin (anaerobic route): step 6/10. Functionally, catalyzes the methylation of C-1 in cobalt-precorrin-5B to form cobalt-precorrin-6A. This Prochlorococcus marinus (strain MIT 9313) protein is Cobalt-precorrin-5B C(1)-methyltransferase.